The sequence spans 415 residues: Serine--tRNA ligase (415 aa).

Position 230 to 232 (230 to 232 (TAE)) interacts with L-serine. ATP is bound at residue 261–263 (RKE). Glutamate 284 is an L-serine binding site. An ATP-binding site is contributed by 348-351 (EISS). Serine 382 provides a ligand contact to L-serine.

Belongs to the class-II aminoacyl-tRNA synthetase family. Type-1 seryl-tRNA synthetase subfamily. In terms of assembly, homodimer. The tRNA molecule binds across the dimer.

It is found in the cytoplasm. The catalysed reaction is tRNA(Ser) + L-serine + ATP = L-seryl-tRNA(Ser) + AMP + diphosphate + H(+). It catalyses the reaction tRNA(Sec) + L-serine + ATP = L-seryl-tRNA(Sec) + AMP + diphosphate + H(+). The protein operates within aminoacyl-tRNA biosynthesis; selenocysteinyl-tRNA(Sec) biosynthesis; L-seryl-tRNA(Sec) from L-serine and tRNA(Sec): step 1/1. Functionally, catalyzes the attachment of serine to tRNA(Ser). Is also able to aminoacylate tRNA(Sec) with serine, to form the misacylated tRNA L-seryl-tRNA(Sec), which will be further converted into selenocysteinyl-tRNA(Sec). The protein is Serine--tRNA ligase of Sulfurimonas denitrificans (strain ATCC 33889 / DSM 1251) (Thiomicrospira denitrificans (strain ATCC 33889 / DSM 1251)).